A 427-amino-acid chain; its full sequence is Inward rectifier potassium channel 2 (427 aa).

Topologically, residues 1–81 are cytoplasmic; the sequence is MGSVRTNRYS…IFTTCVDIRW (81 aa). C76 carries the S-nitrosocysteine modification. Residues 82-106 form a helical membrane-spanning segment; it reads RWMLVIFCLAFVLSWLFFGCVFWLI. At 107–128 the chain is on the extracellular side; sequence ALLHGDLDASKESKACVSEVNS. Positions 129-140 form an intramembrane region, helical; Pore-forming; that stretch reads FTAAFLFSIETQ. The segment at residues 141–147 is an intramembrane region (pore-forming); it reads TTIGYGF. The Selectivity filter signature appears at 142 to 147; it reads TIGYGF. Residues 148–156 lie on the Extracellular side of the membrane; sequence RCVTDECPV. Residues 157–178 form a helical membrane-spanning segment; it reads AVFMVVFQSIVGCIIDAFIIGA. Residues 179-427 are Cytoplasmic-facing; the sequence is VMAKMAKPKK…PRPLRRESEI (249 aa). Residues 181–208 are polyphosphoinositide (PIP2)-binding; sequence AKMAKPKKRNETLVFSHNAVIAMRDGKL. Positions 384 to 427 are disordered; it reads SKEEDDSENGVPESTSTDTPPDLDLHNQASVPLEPRPLRRESEI. Residues 425-427 carry the PDZ-binding motif; sequence SEI.

This sequence belongs to the inward rectifier-type potassium channel (TC 1.A.2.1) family. KCNJ2 subfamily. Homotetramer. Homomultimeric and heteromultimeric association with KCNJ4/Kir2.3. Can form heteromeric channels with Kir2.6/KCNJ18. Associates, via its PDZ-recognition domain, with a complex containing LIN7A, LIN7B, LIN7C, DLG1, CASK and APBA1. In terms of processing, S-nitrosylation increases the open probability and inward rectifying currents.

It is found in the cell membrane. The protein localises to the sarcolemma. The protein resides in the T-tubule. The catalysed reaction is K(+)(in) = K(+)(out). Its activity is regulated as follows. Activated by phosphatidylinositol 4,5 biphosphate (PtdIns(4,5)P2). Functionally, inward rectifier potassium channels are characterized by a greater tendency to allow potassium to flow into the cell rather than out of it. Their voltage dependence is regulated by the concentration of extracellular potassium; as external potassium is raised, the voltage range of the channel opening shifts to more positive voltages. The inward rectification is mainly due to the blockage of outward current by internal magnesium. Blocked by external barium or cesium. Probably participates in establishing action potential waveform and excitability of neuronal and muscle tissues. In Canis lupus familiaris (Dog), this protein is Inward rectifier potassium channel 2 (KCNJ2).